The following is a 436-amino-acid chain: Tubulin epsilon and delta complex protein 2 (436 aa).

Disordered regions lie at residues 53–76 (ARTPSPVPETKEEDPSPACAPSSQ) and 94–191 (VRKG…PSSA). A compositionally biased stretch (low complexity) spans 111–131 (TSKAATSGAAAASHPRAPSRG). The span at 153-170 (DYPEHRLRSKGDKTHVRT) shows a compositional bias: basic and acidic residues. The residue at position 161 (Ser-161) is a Phosphoserine.

Interacts with TEDC1. Found in a complex with TEDC1, TEDC2, TUBE1 and TUBD1.

The protein localises to the cell projection. It localises to the cilium. It is found in the cytoplasm. The protein resides in the cytoskeleton. Its subcellular location is the microtubule organizing center. The protein localises to the centrosome. It localises to the centriole. In terms of biological role, acts as a positive regulator of ciliary hedgehog signaling. Required for centriole stability. The polypeptide is Tubulin epsilon and delta complex protein 2 (Mus musculus (Mouse)).